We begin with the raw amino-acid sequence, 218 residues long: Variable small protein 8 (218 aa).

The first 18 residues, 1 to 18, serve as a signal peptide directing secretion; the sequence is MRKRISAIIMTLFMVFMS. Cys-19 carries N-palmitoyl cysteine lipidation. A lipid anchor (S-diacylglycerol cysteine) is attached at Cys-19.

The protein belongs to the variable small protein (Vsp) family.

The protein localises to the cell outer membrane. Its function is as follows. The Vlp and Vsp proteins are antigenically distinct proteins, only one vlp or vsp gene is transcriptionally active at any one time. Switching between these genes is a mechanism of host immune response evasion. This is Variable small protein 8 from Borrelia hermsii.